We begin with the raw amino-acid sequence, 836 residues long: Ethylene receptor 3 (836 aa).

Helical transmembrane passes span 137–157 (LIAA…AGLR), 166–186 (LVQF…TAFT), and 204–224 (LTAL…PQLL). 2 residues coordinate Cu cation: C176 and H180. One can recognise a GAF domain in the interval 269–413 (DRHTVLYTTL…VVAGQVAVAL (145 aa)). A coiled-coil region spans residues 416 to 452 (ATLLEESRAMRDRLAEQNRELLQARRDALMANEARQA). One can recognise a Histidine kinase domain in the interval 457 to 691 (MSQGMRRPIH…LVLRFQLQSP (235 aa)). The Response regulatory domain occupies 718 to 834 (LLIDDDDDIN…LKDELARILQ (117 aa)).

It belongs to the ethylene receptor family. Requires Cu cation as cofactor.

The protein resides in the endoplasmic reticulum membrane. It carries out the reaction ATP + protein L-histidine = ADP + protein N-phospho-L-histidine.. In terms of biological role, ethylene receptor related to bacterial two-component regulators. Acts as a negative regulator of ethylene signaling. May delay the transition from the vegetative stage to the floral stage by up-regulating GI (GIGANTEA) and RCN1 and cause starch accumulation in stems by down-regulating the alpha-amylase AMY3D. The protein is Ethylene receptor 3 (ETR3) of Oryza sativa subsp. japonica (Rice).